We begin with the raw amino-acid sequence, 578 residues long: Polymerase acidic protein (578 aa).

In terms of assembly, the RNA polymerase is composed of three subunits: PB1, PB2 and PA. Phosphorylated on serines and threonines by host kinases.

Functionally, implicated in endonuclease cleavage of capped RNA primers. Displays an elongation factor activity in viral RNA synthesis. Dispensable for viral transcription, but not replication. The sequence is that of Polymerase acidic protein from Infectious salmon anemia virus (isolate Atlantic salmon/Norway/810/9/99) (ISAV).